The following is a 350-amino-acid chain: Kievitone hydratase (350 aa).

A signal peptide spans 1 to 19; the sequence is MMISSVLVAGVVAVSAALA.

As to quaternary structure, homodimer. Post-translationally, glycosylated.

The protein localises to the secreted. It carries out the reaction kievitone hydrate = kievitone + H2O. Converts fungitoxic kievitone to the less toxic kievitone hydrate, and thereby protects the pathogenic fungus against this phytoalexin. The chain is Kievitone hydratase (khs) from Fusarium solani subsp. phaseoli (Nectria haematococca).